Reading from the N-terminus, the 248-residue chain is 1-(5-phosphoribosyl)-5-[(5-phosphoribosylamino)methylideneamino] imidazole-4-carboxamide isomerase (248 aa).

The Proton acceptor role is filled by D17. The active-site Proton donor is the D136.

Belongs to the HisA/HisF family.

The protein localises to the cytoplasm. It catalyses the reaction 1-(5-phospho-beta-D-ribosyl)-5-[(5-phospho-beta-D-ribosylamino)methylideneamino]imidazole-4-carboxamide = 5-[(5-phospho-1-deoxy-D-ribulos-1-ylimino)methylamino]-1-(5-phospho-beta-D-ribosyl)imidazole-4-carboxamide. The protein operates within amino-acid biosynthesis; L-histidine biosynthesis; L-histidine from 5-phospho-alpha-D-ribose 1-diphosphate: step 4/9. This Arthrobacter sp. (strain FB24) protein is 1-(5-phosphoribosyl)-5-[(5-phosphoribosylamino)methylideneamino] imidazole-4-carboxamide isomerase.